We begin with the raw amino-acid sequence, 91 residues long: Alpha-defensin-related sequence 12 (91 aa).

The signal sequence occupies residues 1–19 (MKKLVLLSAFVLLAFQVQA). Positions 20–65 (DSIQNTDEEIKTEEQPGEENQAVSISFGDPEGYALQDAAIRRARRC) are excised as a propeptide. 6 tandem repeats follow at residues 65-67 (CPP), 68-70 (CPS), 71-73 (CLS), 74-76 (CPW), 77-79 (CPR), and 83-85 (CPM). The segment at 65-88 (CPPCPSCLSCPWCPRCLRCPMCKC) is 6 X 3 AA tandem repeats of C-P-X.

It belongs to the alpha-defensin family. In terms of tissue distribution, paneth cells of the small bowel.

It is found in the secreted. In terms of biological role, apparent precursor of a secreted, cationic, proline- and cysteine-rich peptide that contains Cys-Pro-Xaa repeats. Unlike cryptdin, the proposed mature peptide region lacks the structural motif characteristic of defensins. It may have microbicidal activities. This is Alpha-defensin-related sequence 12 (Defa-rs12) from Mus musculus (Mouse).